Consider the following 78-residue polypeptide: UPF0270 protein IL0325 (78 aa).

This sequence belongs to the UPF0270 family.

This chain is UPF0270 protein IL0325, found in Idiomarina loihiensis (strain ATCC BAA-735 / DSM 15497 / L2-TR).